The primary structure comprises 309 residues: 1,4-dihydroxy-2-naphthoyl-CoA synthase (309 aa).

Substrate-binding positions include Arg-53, 98-102 (SGGDQ), Tyr-110, 152-156 (WAAGG), Thr-179, Ser-185, Tyr-282, and Lys-297.

This sequence belongs to the enoyl-CoA hydratase/isomerase family. MenB subfamily.

It catalyses the reaction 2-succinylbenzoyl-CoA + H(+) = 1,4-dihydroxy-2-naphthoyl-CoA + H2O. It functions in the pathway quinol/quinone metabolism; 1,4-dihydroxy-2-naphthoate biosynthesis; 1,4-dihydroxy-2-naphthoate from chorismate: step 6/7. The protein operates within quinol/quinone metabolism; menaquinone biosynthesis. Converts o-succinylbenzoyl-CoA (OSB-CoA) to 1,4-dihydroxy-2-naphthoyl-CoA (DHNA-CoA). This Mycolicibacterium smegmatis (strain ATCC 700084 / mc(2)155) (Mycobacterium smegmatis) protein is 1,4-dihydroxy-2-naphthoyl-CoA synthase.